Reading from the N-terminus, the 458-residue chain is Probable multidrug resistance protein NorM (458 aa).

The next 12 helical transmembrane spans lie at 14-34 (FLVV…MNFF), 56-76 (LWVP…PIIA), 97-117 (LSIA…DPIL), 134-154 (LIGL…RCLI), 164-184 (MFIT…LIFG), 196-216 (AGYA…VVVV), 241-261 (ILLL…IFAA), 283-303 (FASF…IAVG), 320-340 (LGIT…YVLR), 353-373 (VAWL…SDAL), 389-409 (VPFV…GYLL), and 415-435 (LGPY…AIAL).

Belongs to the multi antimicrobial extrusion (MATE) (TC 2.A.66.1) family.

It localises to the cell membrane. Multidrug efflux pump. The sequence is that of Probable multidrug resistance protein NorM (norM) from Halalkalibacterium halodurans (strain ATCC BAA-125 / DSM 18197 / FERM 7344 / JCM 9153 / C-125) (Bacillus halodurans).